We begin with the raw amino-acid sequence, 226 residues long: ATP-dependent dethiobiotin synthetase BioD (226 aa).

Residue 12 to 17 (GVGKTV) participates in ATP binding. Position 16 (Thr-16) interacts with Mg(2+). Residue Lys-37 is part of the active site. Residue Thr-41 participates in substrate binding. Residues Asp-49, 108–111 (EGAG), and 169–170 (GS) each bind ATP. Residues Asp-49 and Glu-108 each coordinate Mg(2+).

Belongs to the dethiobiotin synthetase family. In terms of assembly, homodimer. Mg(2+) serves as cofactor.

It is found in the cytoplasm. It catalyses the reaction (7R,8S)-7,8-diammoniononanoate + CO2 + ATP = (4R,5S)-dethiobiotin + ADP + phosphate + 3 H(+). The protein operates within cofactor biosynthesis; biotin biosynthesis; biotin from 7,8-diaminononanoate: step 1/2. Functionally, catalyzes a mechanistically unusual reaction, the ATP-dependent insertion of CO2 between the N7 and N8 nitrogen atoms of 7,8-diaminopelargonic acid (DAPA, also called 7,8-diammoniononanoate) to form a ureido ring. The chain is ATP-dependent dethiobiotin synthetase BioD from Mycobacterium marinum (strain ATCC BAA-535 / M).